Reading from the N-terminus, the 207-residue chain is Small ribosomal subunit protein uS4c (207 aa).

The 65-residue stretch at 92-156 folds into the S4 RNA-binding domain; the sequence is MRLDNILFRL…YQSIITKRIE (65 aa).

Belongs to the universal ribosomal protein uS4 family. In terms of assembly, part of the 30S ribosomal subunit. Contacts protein S5. The interaction surface between S4 and S5 is involved in control of translational fidelity.

It localises to the plastid. The protein localises to the chloroplast. Functionally, one of the primary rRNA binding proteins, it binds directly to 16S rRNA where it nucleates assembly of the body of the 30S subunit. Its function is as follows. With S5 and S12 plays an important role in translational accuracy. The polypeptide is Small ribosomal subunit protein uS4c (rps4) (Equisetum palustre (Marsh horsetail)).